The sequence spans 226 residues: Large ribosomal subunit protein uL3 (226 aa).

The span at 135 to 150 (MSSQRASHGNSRSHNV) shows a compositional bias: polar residues. A disordered region spans residues 135–158 (MSSQRASHGNSRSHNVPGSIGMAQ). Gln-158 carries the N5-methylglutamine modification.

The protein belongs to the universal ribosomal protein uL3 family. Part of the 50S ribosomal subunit. Forms a cluster with proteins L14 and L19. In terms of processing, methylated by PrmB.

One of the primary rRNA binding proteins, it binds directly near the 3'-end of the 23S rRNA, where it nucleates assembly of the 50S subunit. The sequence is that of Large ribosomal subunit protein uL3 from Variovorax paradoxus (strain S110).